A 143-amino-acid chain; its full sequence is Large ribosomal subunit protein uL15 (143 aa).

A disordered region spans residues 1–54 (MQLNSIKPAPGAKHPKRRVGRGIGSGLGKTAGRGHKGQKSRAGGFHKVGFEGGQ). Positions 21 to 31 (RGIGSGLGKTA) are enriched in gly residues.

Belongs to the universal ribosomal protein uL15 family. Part of the 50S ribosomal subunit.

Functionally, binds to the 23S rRNA. In Nitrosospira multiformis (strain ATCC 25196 / NCIMB 11849 / C 71), this protein is Large ribosomal subunit protein uL15.